A 113-amino-acid polypeptide reads, in one-letter code: Signal peptidase complex subunit 1 (113 aa).

Topologically, residues 1-32 (MDGMIAMLPAPLQQLSSHIDFQGQKVAERTYQ) are cytoplasmic. A helical transmembrane segment spans residues 33–53 (VILTLAGIIGFFVGYSTQQLS). Over 54–57 (YAMY) the chain is Lumenal. The helical transmembrane segment at 58 to 78 (TVMGAAVFTALIILPPWPFLF) threads the bilayer. Residues 79–113 (RKNPIVWQTPIEEQEASSSSDNEKKDKKKETKKTK) are Cytoplasmic-facing. A disordered region spans residues 89–113 (IEEQEASSSSDNEKKDKKKETKKTK).

Belongs to the SPCS1 family. Component of the signal peptidase complex (SPC) composed of a catalytic subunit sec-11 and three accessory subunits spcs-1, spcs-2 and spcs-3. The complex induces a local thinning of the ER membrane which is used to measure the length of the signal peptide (SP) h-region of protein substrates. This ensures the selectivity of the complex towards h-regions shorter than 18-20 amino acids.

The protein resides in the endoplasmic reticulum membrane. In terms of biological role, component of the signal peptidase complex (SPC) which catalyzes the cleavage of N-terminal signal sequences from nascent proteins as they are translocated into the lumen of the endoplasmic reticulum. Dispensable for SPC enzymatic activity. In Caenorhabditis briggsae, this protein is Signal peptidase complex subunit 1.